The sequence spans 527 residues: Gustatory receptor for bitter taste 66a (527 aa).

Over 1–46 (MAQAEDAVQPLLQQFQQLFFISKIAGILPQDLEKFRSRNLLEKSRN) the chain is Cytoplasmic. Residues 47–67 (GMIYMLSTLILYVVLYNILIY) traverse the membrane as a helical segment. The Extracellular portion of the chain corresponds to 68 to 80 (SFGEEDRSLKASQ). A helical transmembrane segment spans residues 81-101 (STLTFVIGLFLTYIGLIMMVS). The Cytoplasmic segment spans residues 102–144 (DQLTALRNQGRIGELYERIRLVDERLYKEGCVMDNSTIGRRIR). A helical transmembrane segment spans residues 145-165 (IMLIMTVIFELSILVSTYVKL). The Extracellular segment spans residues 166-174 (VDYSQWMSL). The helical transmembrane segment at 175 to 195 (LWIVSAIPTFINTLDKIWFAV) threads the bilayer. The Cytoplasmic segment spans residues 196–345 (SLYALKERFE…KALNELWSYP (150 aa)). A helical transmembrane segment spans residues 346–366 (ILSLMAYGFLIFTAQLYFLYC). Residues 367 to 382 (ATQYQSIPSLFRSAKN) lie on the Extracellular side of the membrane. A helical transmembrane segment spans residues 383–403 (PFITVIVLSYTSGKCVYLIYL). The Cytoplasmic segment spans residues 404 to 460 (SWKTSQASKRTGISLHKCGVVADDNLLYEIVNHLSLKLLNHSVDFSACGFFTLDMET). The chain crosses the membrane as a helical span at residues 461-481 (LYGVSGGITSYLIILIQFNLA). Residues 482–527 (AQQAKEAIQTFNSLNDTAGLVGAATDMDNISSTLRDFVTTTMTPAV) lie on the Extracellular side of the membrane. N-linked (GlcNAc...) asparagine glycans are attached at residues N496 and N510.

This sequence belongs to the insect chemoreceptor superfamily. Gustatory receptor (GR) family. Gr66a subfamily. As to expression, taste hairs in labial palps, labral and cibarial sense organs and forelegs. In larvae, is expressed in neurons of the terminal external chemosensory organ, as well as in the dorsal, ventral, and posterior pharyngeal sense organs.

Its subcellular location is the cell membrane. Its function is as follows. Gustatory receptor required for response to the bitter in taste neurons. Gr66a cells respond to bitter compounds such as caffeine, theophylline, threonine or valine. Flies avoid bitter substances, suggesting that Gr66a neuron activity is sufficient to mediate avoidance behavior. Required for sensing and avoiding N,N-Diethyl-meta-toluamide (DEET), the most widely used insect repellent worldwide, as well as to L-canavanine, a plant-derived insecticide. Gr66a neurons are also involved in the sex-specific perception of molecules inducing male avoidance behavior, probably through sensing 7-tricosene (7-T), a male cuticular pheromone and leading to inhibition of male-male courtship. Finally, also plays a role in oviposition behavior, in which females evaluate their environment and choose to lay eggs on substrates they may find aversive in other contexts. This chain is Gustatory receptor for bitter taste 66a (Gr66a), found in Drosophila melanogaster (Fruit fly).